The primary structure comprises 270 residues: Bis(5'-nucleosyl)-tetraphosphatase, symmetrical (270 aa).

It belongs to the Ap4A hydrolase family.

It catalyses the reaction P(1),P(4)-bis(5'-adenosyl) tetraphosphate + H2O = 2 ADP + 2 H(+). Its function is as follows. Hydrolyzes diadenosine 5',5'''-P1,P4-tetraphosphate to yield ADP. This chain is Bis(5'-nucleosyl)-tetraphosphatase, symmetrical, found in Thioalkalivibrio sulfidiphilus (strain HL-EbGR7).